The sequence spans 89 residues: Small ribosomal subunit protein uS15 (89 aa).

Belongs to the universal ribosomal protein uS15 family. In terms of assembly, part of the 30S ribosomal subunit. Forms a bridge to the 50S subunit in the 70S ribosome, contacting the 23S rRNA.

Its function is as follows. One of the primary rRNA binding proteins, it binds directly to 16S rRNA where it helps nucleate assembly of the platform of the 30S subunit by binding and bridging several RNA helices of the 16S rRNA. Forms an intersubunit bridge (bridge B4) with the 23S rRNA of the 50S subunit in the ribosome. This is Small ribosomal subunit protein uS15 from Dinoroseobacter shibae (strain DSM 16493 / NCIMB 14021 / DFL 12).